A 674-amino-acid polypeptide reads, in one-letter code: Methionine--tRNA ligase (674 aa).

The 'HIGH' region signature appears at 11–21; sequence PYANGDLHLGH. Zn(2+) contacts are provided by cysteine 142, cysteine 145, cysteine 155, and cysteine 158. The 'KMSKS' region motif lies at 330-334; it reads KMSKS. Residue lysine 333 coordinates ATP. In terms of domain architecture, tRNA-binding spans 574–674; the sequence is DFMKVDLRIA…EGAQPGMRVK (101 aa).

Belongs to the class-I aminoacyl-tRNA synthetase family. MetG type 1 subfamily. Homodimer. It depends on Zn(2+) as a cofactor.

It localises to the cytoplasm. It carries out the reaction tRNA(Met) + L-methionine + ATP = L-methionyl-tRNA(Met) + AMP + diphosphate. Is required not only for elongation of protein synthesis but also for the initiation of all mRNA translation through initiator tRNA(fMet) aminoacylation. The sequence is that of Methionine--tRNA ligase from Francisella tularensis subsp. holarctica (strain FTNF002-00 / FTA).